The primary structure comprises 392 residues: GTPase Obg (392 aa).

The Obg domain occupies 1–159; that stretch reads MKFIDEALIR…RDLQLELMLL (159 aa). One can recognise an OBG-type G domain in the interval 160-333; sequence ADVGMLGLPN…LCRDIMDFIE (174 aa). GTP-binding positions include 166–173, 191–195, 213–216, 283–286, and 314–316; these read GLPNAGKS, FTTLV, DIPG, NKID, and SAA. Positions 173 and 193 each coordinate Mg(2+). A disordered region spans residues 361–392; that stretch reads SEQVFTEDDQEEDDWDDWSEDDEEGVEIIYKP. Residues 365–386 are compositionally biased toward acidic residues; the sequence is FTEDDQEEDDWDDWSEDDEEGV.

It belongs to the TRAFAC class OBG-HflX-like GTPase superfamily. OBG GTPase family. As to quaternary structure, monomer. Requires Mg(2+) as cofactor.

It is found in the cytoplasm. Functionally, an essential GTPase which binds GTP, GDP and possibly (p)ppGpp with moderate affinity, with high nucleotide exchange rates and a fairly low GTP hydrolysis rate. Plays a role in control of the cell cycle, stress response, ribosome biogenesis and in those bacteria that undergo differentiation, in morphogenesis control. The sequence is that of GTPase Obg from Histophilus somni (strain 2336) (Haemophilus somnus).